Reading from the N-terminus, the 182-residue chain is Small ribosomal subunit protein uS9 (182 aa).

It belongs to the universal ribosomal protein uS9 family.

The protein is Small ribosomal subunit protein uS9 of Corynebacterium glutamicum (strain R).